We begin with the raw amino-acid sequence, 536 residues long: Ribulokinase (536 aa).

This sequence belongs to the ribulokinase family.

The enzyme catalyses D-ribulose + ATP = D-ribulose 5-phosphate + ADP + H(+). It carries out the reaction L-ribulose + ATP = L-ribulose 5-phosphate + ADP + H(+). Its pathway is carbohydrate degradation; L-arabinose degradation via L-ribulose; D-xylulose 5-phosphate from L-arabinose (bacterial route): step 2/3. The chain is Ribulokinase from Staphylococcus epidermidis (strain ATCC 12228 / FDA PCI 1200).